Here is a 699-residue protein sequence, read N- to C-terminus: Elongation factor G 1 (699 aa).

The tr-type G domain occupies 8–290 (ERYRNIGICA…AVIEYLPSPT (283 aa)). GTP contacts are provided by residues 17–24 (AHVDAGKT), 88–92 (DTPGH), and 142–145 (NKMD).

The protein belongs to the TRAFAC class translation factor GTPase superfamily. Classic translation factor GTPase family. EF-G/EF-2 subfamily.

The protein resides in the cytoplasm. In terms of biological role, catalyzes the GTP-dependent ribosomal translocation step during translation elongation. During this step, the ribosome changes from the pre-translocational (PRE) to the post-translocational (POST) state as the newly formed A-site-bound peptidyl-tRNA and P-site-bound deacylated tRNA move to the P and E sites, respectively. Catalyzes the coordinated movement of the two tRNA molecules, the mRNA and conformational changes in the ribosome. This Hahella chejuensis (strain KCTC 2396) protein is Elongation factor G 1.